The sequence spans 837 residues: ABC transporter A family member 8 (837 aa).

7 helical membrane-spanning segments follow: residues 29–49, 244–264, 303–323, 326–346, 356–376, 393–413, and 455–475; these read YFST…FYII, VVSL…FIFL, LIIC…FFLG, FLVL…MAFF, VAIG…LTFN, GAAF…SKVL, and LAYM…IEYA. The ABC transporter domain maps to 516–750; that stretch reads IRGLSKTFNK…YGEGYSVQVI (235 aa). Residue 553-560 participates in ATP binding; that stretch reads GSNGAGKS.

This sequence belongs to the ABC transporter superfamily. ABCA family.

It localises to the membrane. This chain is ABC transporter A family member 8 (abcA8), found in Dictyostelium discoideum (Social amoeba).